Here is a 307-residue protein sequence, read N- to C-terminus: MNPLKSPLEGFLNILKPPGMTSHDVVAKARRILREKRIGHMGTLDPDAAGVLPIALGQATRLIELVRGDKSYRAQLLLGRITDSQDVSGRIVEEHPIPQLTRQAWEELLKEFQGLMEQIPPMVSAVSVGGKRLYEYARQGIEVERPSRKINIDRIDIVQYHEHAPGELILDVDCSGGTYIRTLCHDIGQRLGCGAIMGWLIRRRSGPFRLQNSCTLKELEQGLAPEKLVSPGEVLQHLPNMEINERRLPALKQGLAQFLPDKNWMEGQWIRMNYRGQLLAVGQAIWQDDRWLCQPRKVLQWSESILK.

Residue D45 is the Nucleophile of the active site.

This sequence belongs to the pseudouridine synthase TruB family. Type 1 subfamily.

It catalyses the reaction uridine(55) in tRNA = pseudouridine(55) in tRNA. In terms of biological role, responsible for synthesis of pseudouridine from uracil-55 in the psi GC loop of transfer RNAs. The polypeptide is tRNA pseudouridine synthase B (Heliobacterium mobile (Heliobacillus mobilis)).